A 94-amino-acid chain; its full sequence is Small ribosomal subunit protein uS19 (94 aa).

Belongs to the universal ribosomal protein uS19 family.

Its function is as follows. Protein S19 forms a complex with S13 that binds strongly to the 16S ribosomal RNA. This chain is Small ribosomal subunit protein uS19, found in Syntrophomonas wolfei subsp. wolfei (strain DSM 2245B / Goettingen).